The chain runs to 510 residues: Glycosyl hydrolase YngK (510 aa).

An N-terminal signal peptide occupies residues M1–A30.

The protein belongs to the glycosyl hydrolase-like 10 (GHL10) family.

The chain is Glycosyl hydrolase YngK (yngK) from Bacillus subtilis (strain 168).